Consider the following 572-residue polypeptide: Urease subunit alpha (572 aa).

The region spanning 136 to 572 (GGIDTHIHFI…VPLGQRYFLF (437 aa)) is the Urease domain. H141, H143, and K224 together coordinate Ni(2+). N6-carboxylysine is present on K224. Substrate is bound at residue H226. Ni(2+)-binding residues include H253 and H279. Catalysis depends on H327, which acts as the Proton donor. D367 contacts Ni(2+).

The protein belongs to the metallo-dependent hydrolases superfamily. Urease alpha subunit family. Heterotrimer of UreA (gamma), UreB (beta) and UreC (alpha) subunits. Three heterotrimers associate to form the active enzyme. The cofactor is Ni cation. Carboxylation allows a single lysine to coordinate two nickel ions.

The protein resides in the cytoplasm. It catalyses the reaction urea + 2 H2O + H(+) = hydrogencarbonate + 2 NH4(+). It functions in the pathway nitrogen metabolism; urea degradation; CO(2) and NH(3) from urea (urease route): step 1/1. The sequence is that of Urease subunit alpha from Haemophilus influenzae (strain PittGG).